Reading from the N-terminus, the 353-residue chain is Photosystem II D2 protein (353 aa).

Position 2 is an N-acetylthreonine (T2). Position 2 is a phosphothreonine (T2). A helical transmembrane segment spans residues C41 to T61. Residue H118 coordinates chlorophyll a. Residues G125–P141 form a helical membrane-spanning segment. Positions 130 and 143 each coordinate pheophytin a. The helical transmembrane segment at V153 to S166 threads the bilayer. H198 provides a ligand contact to chlorophyll a. A helical transmembrane segment spans residues A208–D228. A plastoquinone-binding residues include H215 and F262. Residue H215 participates in Fe cation binding. H269 serves as a coordination point for Fe cation. Residues G279 to R295 traverse the membrane as a helical segment.

It belongs to the reaction center PufL/M/PsbA/D family. PSII is composed of 1 copy each of membrane proteins PsbA, PsbB, PsbC, PsbD, PsbE, PsbF, PsbH, PsbI, PsbJ, PsbK, PsbL, PsbM, PsbT, PsbX, PsbY, PsbZ, Psb30/Ycf12, at least 3 peripheral proteins of the oxygen-evolving complex and a large number of cofactors. It forms dimeric complexes. Requires The D1/D2 heterodimer binds P680, chlorophylls that are the primary electron donor of PSII, and subsequent electron acceptors. It shares a non-heme iron and each subunit binds pheophytin, quinone, additional chlorophylls, carotenoids and lipids. There is also a Cl(-1) ion associated with D1 and D2, which is required for oxygen evolution. The PSII complex binds additional chlorophylls, carotenoids and specific lipids. as cofactor.

It localises to the plastid membrane. It catalyses the reaction 2 a plastoquinone + 4 hnu + 2 H2O = 2 a plastoquinol + O2. Photosystem II (PSII) is a light-driven water:plastoquinone oxidoreductase that uses light energy to abstract electrons from H(2)O, generating O(2) and a proton gradient subsequently used for ATP formation. It consists of a core antenna complex that captures photons, and an electron transfer chain that converts photonic excitation into a charge separation. The D1/D2 (PsbA/PsbD) reaction center heterodimer binds P680, the primary electron donor of PSII as well as several subsequent electron acceptors. D2 is needed for assembly of a stable PSII complex. This chain is Photosystem II D2 protein, found in Cuscuta reflexa (Southern Asian dodder).